Consider the following 753-residue polypeptide: Probable TonB-dependent siderophore receptor PiuA (753 aa).

Residues 1-35 (MSRQSTDTAVSSQRLLASAIGVAITAIAAPQAAQA) form the signal peptide. The TBDR plug domain maps to 79–185 (PLLDTPKTVT…TGGSLNLISK (107 aa)). Residues 190–753 (DNFTDAGFTW…TALLGVNFHF (564 aa)) form the TBDR beta-barrel domain. A disulfide bond links cysteine 420 and cysteine 430.

Belongs to the TonB-dependent receptor family.

The protein resides in the cell outer membrane. Involved in the initial step of iron uptake by binding iron chelating siderophores, thereby allowing extraction of iron from the environment. Probably involved in the transport of siderophores, including host catecholamines such as dopamine. The polypeptide is Probable TonB-dependent siderophore receptor PiuA (Pseudomonas aeruginosa (strain ATCC 15692 / DSM 22644 / CIP 104116 / JCM 14847 / LMG 12228 / 1C / PRS 101 / PAO1)).